The chain runs to 380 residues: UDP-N-acetylglucosamine--N-acetylmuramyl-(pentapeptide) pyrophosphoryl-undecaprenol N-acetylglucosamine transferase (380 aa).

UDP-N-acetyl-alpha-D-glucosamine is bound by residues 23–25 (TGG), asparagine 137, arginine 178, serine 210, isoleucine 266, and glutamine 311.

It belongs to the glycosyltransferase 28 family. MurG subfamily.

It is found in the cell inner membrane. It carries out the reaction di-trans,octa-cis-undecaprenyl diphospho-N-acetyl-alpha-D-muramoyl-L-alanyl-D-glutamyl-meso-2,6-diaminopimeloyl-D-alanyl-D-alanine + UDP-N-acetyl-alpha-D-glucosamine = di-trans,octa-cis-undecaprenyl diphospho-[N-acetyl-alpha-D-glucosaminyl-(1-&gt;4)]-N-acetyl-alpha-D-muramoyl-L-alanyl-D-glutamyl-meso-2,6-diaminopimeloyl-D-alanyl-D-alanine + UDP + H(+). Its pathway is cell wall biogenesis; peptidoglycan biosynthesis. Its function is as follows. Cell wall formation. Catalyzes the transfer of a GlcNAc subunit on undecaprenyl-pyrophosphoryl-MurNAc-pentapeptide (lipid intermediate I) to form undecaprenyl-pyrophosphoryl-MurNAc-(pentapeptide)GlcNAc (lipid intermediate II). This chain is UDP-N-acetylglucosamine--N-acetylmuramyl-(pentapeptide) pyrophosphoryl-undecaprenol N-acetylglucosamine transferase, found in Bacteroides fragilis (strain ATCC 25285 / DSM 2151 / CCUG 4856 / JCM 11019 / LMG 10263 / NCTC 9343 / Onslow / VPI 2553 / EN-2).